A 274-amino-acid chain; its full sequence is Diaminopimelate epimerase (274 aa).

Residues Asn-11, Gln-44, and Asn-64 each contribute to the substrate site. The active-site Proton donor is Cys-73. Residues 74-75, Asn-157, Asn-190, and 208-209 each bind substrate; these read GN and ER. Cys-217 acts as the Proton acceptor in catalysis. Residue 218–219 participates in substrate binding; that stretch reads GS.

The protein belongs to the diaminopimelate epimerase family. Homodimer.

It localises to the cytoplasm. The enzyme catalyses (2S,6S)-2,6-diaminopimelate = meso-2,6-diaminopimelate. It participates in amino-acid biosynthesis; L-lysine biosynthesis via DAP pathway; DL-2,6-diaminopimelate from LL-2,6-diaminopimelate: step 1/1. Its function is as follows. Catalyzes the stereoinversion of LL-2,6-diaminopimelate (L,L-DAP) to meso-diaminopimelate (meso-DAP), a precursor of L-lysine and an essential component of the bacterial peptidoglycan. In Erwinia tasmaniensis (strain DSM 17950 / CFBP 7177 / CIP 109463 / NCPPB 4357 / Et1/99), this protein is Diaminopimelate epimerase.